Here is a 476-residue protein sequence, read N- to C-terminus: Ribulose bisphosphate carboxylase large chain (476 aa).

Residues Asn124 and Thr174 each contribute to the substrate site. Residue Lys176 is the Proton acceptor of the active site. Lys178 is a binding site for substrate. Residues Lys202, Asp204, and Glu205 each coordinate Mg(2+). Lys202 carries the N6-carboxylysine modification. His295 (proton acceptor) is an active-site residue. Substrate is bound by residues Arg296, His328, and Ser380.

Belongs to the RuBisCO large chain family. Type I subfamily. As to quaternary structure, heterohexadecamer of 8 large chains and 8 small chains; disulfide-linked. The disulfide link is formed within the large subunit homodimers. Requires Mg(2+) as cofactor. The disulfide bond which can form in the large chain dimeric partners within the hexadecamer appears to be associated with oxidative stress and protein turnover.

The protein resides in the carboxysome. It carries out the reaction 2 (2R)-3-phosphoglycerate + 2 H(+) = D-ribulose 1,5-bisphosphate + CO2 + H2O. The catalysed reaction is D-ribulose 1,5-bisphosphate + O2 = 2-phosphoglycolate + (2R)-3-phosphoglycerate + 2 H(+). RuBisCO catalyzes two reactions: the carboxylation of D-ribulose 1,5-bisphosphate, the primary event in carbon dioxide fixation, as well as the oxidative fragmentation of the pentose substrate in the photorespiration process. Both reactions occur simultaneously and in competition at the same active site. The protein is Ribulose bisphosphate carboxylase large chain of Acaryochloris marina (strain MBIC 11017).